Here is a 73-residue protein sequence, read N- to C-terminus: DNA gyrase inhibitor YacG (73 aa).

Positions 14, 17, 30, and 34 each coordinate Zn(2+). A disordered region spans residues 54–73; the sequence is AEQADDTAGPGAAEDDTDSH.

It belongs to the DNA gyrase inhibitor YacG family. Interacts with GyrB. It depends on Zn(2+) as a cofactor.

Its function is as follows. Inhibits all the catalytic activities of DNA gyrase by preventing its interaction with DNA. Acts by binding directly to the C-terminal domain of GyrB, which probably disrupts DNA binding by the gyrase. This chain is DNA gyrase inhibitor YacG, found in Hyphomonas neptunium (strain ATCC 15444).